Consider the following 129-residue polypeptide: D-ribose pyranase 2 (129 aa).

The active-site Proton donor is the His-20. Residues Asp-28, His-96, and 118 to 120 contribute to the substrate site; that span reads YAN.

The protein belongs to the RbsD / FucU family. RbsD subfamily. As to quaternary structure, homodecamer.

It is found in the cytoplasm. It carries out the reaction beta-D-ribopyranose = beta-D-ribofuranose. Its pathway is carbohydrate metabolism; D-ribose degradation; D-ribose 5-phosphate from beta-D-ribopyranose: step 1/2. Catalyzes the interconversion of beta-pyran and beta-furan forms of D-ribose. In Streptomyces griseus subsp. griseus (strain JCM 4626 / CBS 651.72 / NBRC 13350 / KCC S-0626 / ISP 5235), this protein is D-ribose pyranase 2.